The primary structure comprises 910 residues: Leucine--tRNA ligase (910 aa).

The 'HIGH' region motif lies at proline 42 to histidine 52. A 'KMSKS' region motif is present at residues threonine 658 to serine 662. ATP is bound at residue lysine 661.

It belongs to the class-I aminoacyl-tRNA synthetase family.

It is found in the cytoplasm. It carries out the reaction tRNA(Leu) + L-leucine + ATP = L-leucyl-tRNA(Leu) + AMP + diphosphate. The sequence is that of Leucine--tRNA ligase from Acidovorax ebreus (strain TPSY) (Diaphorobacter sp. (strain TPSY)).